The sequence spans 433 residues: Type I acyl-CoA thioesterase mpaH (433 aa).

The segment at 58–246 (HGVGLPKELY…IKARFGTTAD (189 aa)) is abhydrolase domain. Val60 is a substrate binding site. The active-site Nucleophile is the Ser139. Residue Phe140 participates in substrate binding. Residues Asp163 and His365 contribute to the active site.

This sequence belongs to the AB hydrolase superfamily. MpaH hydrolase family. In terms of assembly, homodimer.

It is found in the peroxisome matrix. The catalysed reaction is mycophenolyl-CoA + H2O = mycophenolate + CoA + H(+). Its pathway is secondary metabolite biosynthesis; terpenoid biosynthesis. Type I acyl-CoA thioesterase; part of the gene cluster that mediates the biosynthesis of mycophenolic acid (MPA), the first isolated antibiotic natural product in the world obtained from a culture of Penicillium brevicompactum in 1893. MpaH acts as a peroxisomal acyl-CoA hydrolase that converts MPA-CoA into the final product MPA. The first step of the pathway is the synthesis of 5-methylorsellinic acid (5MOA) by the cytosolic polyketide synthase mpaC. 5MOA is then converted to the phthalide compound 5,7-dihydroxy-4,6-dimethylphthalide (DHMP) by the endoplasmic reticulum-bound cytochrome P450 monooxygenase mpaDE. MpaDE first catalyzes hydroxylation of 5-MOA to 4,6-dihydroxy-2-(hydroxymethyl)-3-methylbenzoic acid (DHMB). MpaDE then acts as a lactone synthase that catalyzes the ring closure to convert DHMB into DHMP. The next step is the prenylation of DHMP by the Golgi apparatus-associated prenyltransferase mpaA to yield farnesyl-DHMP (FDHMP). The ER-bound oxygenase mpaB then mediates the oxidative cleavage the C19-C20 double bond in FDHMP to yield FDHMP-3C via a mycophenolic aldehyde intermediate. The O-methyltransferase mpaG catalyzes the methylation of FDHMP-3C to yield MFDHMP-3C. After the cytosolic methylation of FDHMP-3C, MFDHMP-3C enters into peroxisomes probably via free diffusion due to its low molecular weight. Upon a peroxisomal CoA ligation reaction, catalyzed by a beta-oxidation component enzyme acyl-CoA ligase ACL891, MFDHMP-3C-CoA would then be restricted to peroxisomes for the following beta-oxidation pathway steps. The peroxisomal beta-oxidation machinery than converts MFDHMP-3C-CoA into MPA_CoA, via a beta-oxidation chain-shortening process. Finally mpaH acts as a peroxisomal acyl-CoA hydrolase with high substrate specificity toward MPA-CoA to release the final product MPA. This chain is Type I acyl-CoA thioesterase mpaH, found in Penicillium brevicompactum.